Reading from the N-terminus, the 799-residue chain is Sodium- and chloride-dependent glycine transporter 2 (799 aa).

The tract at residues 1-64 (MDCSAPKEMN…RSASTGAQTF (64 aa)) is disordered. The Cytoplasmic portion of the chain corresponds to 1-201 (MDCSAPKEMN…ARGNWSSKLD (201 aa)). Over residues 40 to 57 (PAAAPAAAVQPPRVPRSA) the composition is skewed to low complexity. S58 bears the Phosphoserine mark. Phosphothreonine is present on T59. S86 bears the Phosphoserine mark. The next 3 membrane-spanning stretches (helical) occupy residues 202–222 (FILS…FPYL), 230–249 (AFLI…IFFL), and 273–293 (GCGI…NVII). Na(+) contacts are provided by G208, A210, V211, and N215. The Extracellular portion of the chain corresponds to 294–395 (CYTLFYLFAS…AGIEYPGEIR (102 aa)). An intrachain disulfide couples C313 to C322. N-linked (GlcNAc...) asparagine glycans are attached at residues N345, N355, N360, and N366. The next 5 membrane-spanning stretches (helical) occupy residues 396–414 (WPLA…ASLA), 423–440 (VVYF…ILLI), 476–493 (IFFS…LSSY), 505–526 (LIVT…FSVI), and 559–578 (LPLS…TLGL). Na(+) contacts are provided by S479, N511, L576, and D579. Helical transmembrane passes span 606 to 624 (VFTL…PMIT), 640 to 660 (SYAL…VYGL), 681 to 700 (VCWA…FSFY), and 719 to 737 (LGWL…MFVI). Residues 738–799 (KMYLAPGRFI…VKDLELGTQC (62 aa)) are Cytoplasmic-facing.

The protein belongs to the sodium:neurotransmitter symporter (SNF) (TC 2.A.22) family. SLC6A5 subfamily. N-glycosylated. As to expression, specifically expressed in spinal cord, brain stem, and to a lesser extent in the cerebellum.

It is found in the cell membrane. The enzyme catalyses glycine(out) + chloride(out) + 3 Na(+)(out) = glycine(in) + chloride(in) + 3 Na(+)(in). Its function is as follows. Sodium- and chloride-dependent glycine transporter. Terminates the action of glycine by its high affinity sodium-dependent reuptake into presynaptic terminals. May be responsible for the termination of neurotransmission at strychnine-sensitive glycinergic synapses. This chain is Sodium- and chloride-dependent glycine transporter 2 (Slc6a5), found in Rattus norvegicus (Rat).